A 142-amino-acid chain; its full sequence is Large ribosomal subunit protein uL11 (142 aa).

It belongs to the universal ribosomal protein uL11 family. Part of the ribosomal stalk of the 50S ribosomal subunit. Interacts with L10 and the large rRNA to form the base of the stalk. L10 forms an elongated spine to which L12 dimers bind in a sequential fashion forming a multimeric L10(L12)X complex. Post-translationally, one or more lysine residues are methylated.

Its function is as follows. Forms part of the ribosomal stalk which helps the ribosome interact with GTP-bound translation factors. The chain is Large ribosomal subunit protein uL11 from Klebsiella pneumoniae (strain 342).